A 301-amino-acid polypeptide reads, in one-letter code: GTPase Era (301 aa).

The region spanning 4 to 173 is the Era-type G domain; the sequence is KAGFVALIGK…LECISKHLSP (170 aa). The segment at 12–19 is G1; the sequence is GKPNAGKS. A GTP-binding site is contributed by 12–19; that stretch reads GKPNAGKS. The segment at 38–42 is G2; it reads NATRK. Residues 64–67 are G3; sequence DTPG. GTP-binding positions include 64 to 68 and 122 to 125; these read DTPGL and SKID. A G4 region spans residues 122–125; sequence SKID. Residues 152–154 form a G5 region; the sequence is LSA. Residues 204 to 280 form the KH type-2 domain; that stretch reads LSDEIPYESD…FLNLQVIAQK (77 aa).

Belongs to the TRAFAC class TrmE-Era-EngA-EngB-Septin-like GTPase superfamily. Era GTPase family. In terms of assembly, monomer.

It localises to the cytoplasm. Its subcellular location is the cell inner membrane. Its function is as follows. An essential GTPase that binds both GDP and GTP, with rapid nucleotide exchange. Plays a role in 16S rRNA processing and 30S ribosomal subunit biogenesis and possibly also in cell cycle regulation and energy metabolism. The protein is GTPase Era of Helicobacter pylori (strain Shi470).